A 250-amino-acid polypeptide reads, in one-letter code: Triosephosphate isomerase (250 aa).

Residue 8–10 (NWK) coordinates substrate. Residue His96 is the Electrophile of the active site. The active-site Proton acceptor is the Glu169. Substrate-binding positions include Gly175, Ser214, and 235–236 (GG).

This sequence belongs to the triosephosphate isomerase family. Homodimer.

The protein resides in the cytoplasm. The catalysed reaction is D-glyceraldehyde 3-phosphate = dihydroxyacetone phosphate. Its pathway is carbohydrate biosynthesis; gluconeogenesis. The protein operates within carbohydrate degradation; glycolysis; D-glyceraldehyde 3-phosphate from glycerone phosphate: step 1/1. Its function is as follows. Involved in the gluconeogenesis. Catalyzes stereospecifically the conversion of dihydroxyacetone phosphate (DHAP) to D-glyceraldehyde-3-phosphate (G3P). The sequence is that of Triosephosphate isomerase from Oleidesulfovibrio alaskensis (strain ATCC BAA-1058 / DSM 17464 / G20) (Desulfovibrio alaskensis).